The primary structure comprises 340 residues: Phosphoribosylformylglycinamidine cyclo-ligase (340 aa).

It belongs to the AIR synthase family.

The protein localises to the cytoplasm. It catalyses the reaction 2-formamido-N(1)-(5-O-phospho-beta-D-ribosyl)acetamidine + ATP = 5-amino-1-(5-phospho-beta-D-ribosyl)imidazole + ADP + phosphate + H(+). It functions in the pathway purine metabolism; IMP biosynthesis via de novo pathway; 5-amino-1-(5-phospho-D-ribosyl)imidazole from N(2)-formyl-N(1)-(5-phospho-D-ribosyl)glycinamide: step 2/2. This chain is Phosphoribosylformylglycinamidine cyclo-ligase, found in Streptococcus pyogenes serotype M12 (strain MGAS2096).